Here is a 393-residue protein sequence, read N- to C-terminus: Methylthioribose-1-phosphate isomerase (393 aa).

The active-site Proton donor is Asp265.

It belongs to the eIF-2B alpha/beta/delta subunits family. MtnA subfamily.

The protein resides in the cytoplasm. Its subcellular location is the nucleus. The catalysed reaction is 5-(methylsulfanyl)-alpha-D-ribose 1-phosphate = 5-(methylsulfanyl)-D-ribulose 1-phosphate. The protein operates within amino-acid biosynthesis; L-methionine biosynthesis via salvage pathway; L-methionine from S-methyl-5-thio-alpha-D-ribose 1-phosphate: step 1/6. In terms of biological role, catalyzes the interconversion of methylthioribose-1-phosphate (MTR-1-P) into methylthioribulose-1-phosphate (MTRu-1-P). The sequence is that of Methylthioribose-1-phosphate isomerase from Cryptococcus neoformans var. neoformans serotype D (strain JEC21 / ATCC MYA-565) (Filobasidiella neoformans).